The sequence spans 235 residues: Probable ribonuclease P protein subunit 3 (235 aa).

The protein belongs to the eukaryotic/archaeal RNase P protein component 3 family.

The protein resides in the nucleus. The catalysed reaction is Endonucleolytic cleavage of RNA, removing 5'-extranucleotides from tRNA precursor.. Its function is as follows. Part of ribonuclease P, a protein complex that generates mature tRNA molecules by cleaving their 5'-ends. The protein is Probable ribonuclease P protein subunit 3 of Schizosaccharomyces pombe (strain 972 / ATCC 24843) (Fission yeast).